Here is a 733-residue protein sequence, read N- to C-terminus: Fibronectin type III domain-containing protein 7 (733 aa).

Residues 1 to 25 form the signal peptide; that stretch reads MAGGRETCLPLIGFILICLKMVASA. Fibronectin type-III domains lie at 28–115, 116–202, 203–288, 289–373, 374–459, 460–544, 545–632, and 631–715; these read APEI…TVLA, APIL…TSPR, APAN…TVAC, APGR…TAPC, CPSD…TAPC, SPEI…TVPC, CPTG…CCPL, and PLGV…YSVT. Residue Asn-230 is glycosylated (N-linked (GlcNAc...) asparagine). A glycan (N-linked (GlcNAc...) asparagine) is linked at Asn-433.

It is found in the secreted. The protein is Fibronectin type III domain-containing protein 7 (FNDC7) of Homo sapiens (Human).